The primary structure comprises 86 residues: Large ribosomal subunit protein bL27 (86 aa).

A disordered region spans residues 1–26 (MAHKKAAGSTRNGRDSESKRLGVKRY).

It belongs to the bacterial ribosomal protein bL27 family.

This chain is Large ribosomal subunit protein bL27, found in Marinobacter nauticus (strain ATCC 700491 / DSM 11845 / VT8) (Marinobacter aquaeolei).